Reading from the N-terminus, the 1093-residue chain is Carbamoyl phosphate synthase large chain (1093 aa).

Residues 1-412 (MPRRNDIRKI…SLMKALRSLE (412 aa)) form a carboxyphosphate synthetic domain region. 12 residues coordinate ATP: Arg-139, Arg-179, Gly-185, Gly-186, Glu-218, Val-220, Glu-225, Gly-251, Val-252, His-253, Gln-295, and Glu-309. Residues 143-338 (KDAMTRIGLD…IAKIAAKLAV (196 aa)) form the ATP-grasp 1 domain. Residues Gln-295, Glu-309, and Asn-311 each coordinate Mg(2+). Gln-295, Glu-309, and Asn-311 together coordinate Mn(2+). Residues 413–560 (TGKRVGAEVL…YSSYEEEDEA (148 aa)) form an oligomerization domain region. The tract at residues 561-952 (PQTDKRKVII…AFAKAQLSAG (392 aa)) is carbamoyl phosphate synthetic domain. The ATP-grasp 2 domain maps to 689–880 (GKLLEQLQIP…LAKIASRLMT (192 aa)). 10 residues coordinate ATP: Arg-725, His-764, Leu-766, Glu-771, Gly-796, Ile-797, His-798, Ser-799, Gln-839, and Glu-851. Mg(2+)-binding residues include Gln-839, Glu-851, and Asn-853. Mn(2+) contacts are provided by Gln-839, Glu-851, and Asn-853. One can recognise an MGS-like domain in the interval 953–1093 (LILPSSGTVF…QLLHAGHAVK (141 aa)). The tract at residues 953 to 1093 (LILPSSGTVF…QLLHAGHAVK (141 aa)) is allosteric domain.

It belongs to the CarB family. In terms of assembly, composed of two chains; the small (or glutamine) chain promotes the hydrolysis of glutamine to ammonia, which is used by the large (or ammonia) chain to synthesize carbamoyl phosphate. Tetramer of heterodimers (alpha,beta)4. Mg(2+) serves as cofactor. The cofactor is Mn(2+).

The catalysed reaction is hydrogencarbonate + L-glutamine + 2 ATP + H2O = carbamoyl phosphate + L-glutamate + 2 ADP + phosphate + 2 H(+). It catalyses the reaction hydrogencarbonate + NH4(+) + 2 ATP = carbamoyl phosphate + 2 ADP + phosphate + 2 H(+). It participates in amino-acid biosynthesis; L-arginine biosynthesis; carbamoyl phosphate from bicarbonate: step 1/1. Its pathway is pyrimidine metabolism; UMP biosynthesis via de novo pathway; (S)-dihydroorotate from bicarbonate: step 1/3. Functionally, large subunit of the glutamine-dependent carbamoyl phosphate synthetase (CPSase). CPSase catalyzes the formation of carbamoyl phosphate from the ammonia moiety of glutamine, carbonate, and phosphate donated by ATP, constituting the first step of 2 biosynthetic pathways, one leading to arginine and/or urea and the other to pyrimidine nucleotides. The large subunit (synthetase) binds the substrates ammonia (free or transferred from glutamine from the small subunit), hydrogencarbonate and ATP and carries out an ATP-coupled ligase reaction, activating hydrogencarbonate by forming carboxy phosphate which reacts with ammonia to form carbamoyl phosphate. The chain is Carbamoyl phosphate synthase large chain from Acidobacterium capsulatum (strain ATCC 51196 / DSM 11244 / BCRC 80197 / JCM 7670 / NBRC 15755 / NCIMB 13165 / 161).